A 132-amino-acid polypeptide reads, in one-letter code: ATP synthase epsilon chain (132 aa).

This sequence belongs to the ATPase epsilon chain family. As to quaternary structure, F-type ATPases have 2 components, CF(1) - the catalytic core - and CF(0) - the membrane proton channel. CF(1) has five subunits: alpha(3), beta(3), gamma(1), delta(1), epsilon(1). CF(0) has three main subunits: a, b and c.

The protein localises to the cell membrane. Produces ATP from ADP in the presence of a proton gradient across the membrane. The polypeptide is ATP synthase epsilon chain (Desulfitobacterium hafniense (strain Y51)).